The following is a 182-amino-acid chain: Vomeronasal secretory protein 1 (182 aa).

The first 18 residues, 1–18, serve as a signal peptide directing secretion; the sequence is MRALLLIISFCLVAVLQA. N-linked (GlcNAc...) asparagine glycosylation is present at N30. A disulfide bridge connects residues C76 and C168.

It belongs to the calycin superfamily. Lipocalin family. Specifically expressed in vomeronasal and posterior glands of the nasal septum, the ducts of which open into the lumen of the vomeronasal organ.

It is found in the secreted. Its function is as follows. Transport of lipophilic molecules, possible pheromone-carrier. This is Vomeronasal secretory protein 1 (Lcn3) from Mus musculus (Mouse).